A 717-amino-acid polypeptide reads, in one-letter code: Photosystem I P700 chlorophyll a apoprotein A1 (717 aa).

Helical transmembrane passes span 58 to 81 (VFSAHFGQLSIIFLWLSGMYFHGA), 144 to 167 (LYCTAIGALVFAGLMLFAGWFHYH), 183 to 207 (LNHHLAGLLGLGSLSWAGHQVHVSL), 279 to 297 (IAHHHLAIAILFLIAGHMY), 334 to 357 (WHAQLSLNLAMLGSLTIVVAHHMY), 373 to 399 (LSLFTHHMWIGGFLIVGAAAHAAIFMV), 421 to 443 (AIISHLNWACIFLGFHSFGLYIH), and 519 to 537 (FLVHHIHAFTIHVTVLILL). [4Fe-4S] cluster contacts are provided by C561 and C570. 2 helical membrane-spanning segments follow: residues 577–598 (HVFLGLFWMYNAISVVIFHFSW) and 652–674 (LSAYGLFFLGAHFVWAFSLMFLF). H663 contributes to the chlorophyll a' binding site. Chlorophyll a is bound by residues M671 and Y679. W680 contacts phylloquinone. Residues 712–717 (AVGVTH) form a helical membrane-spanning segment.

The protein belongs to the PsaA/PsaB family. The PsaA/B heterodimer binds the P700 chlorophyll special pair and subsequent electron acceptors. PSI consists of a core antenna complex that captures photons, and an electron transfer chain that converts photonic excitation into a charge separation. The eukaryotic PSI reaction center is composed of at least 11 subunits. The cofactor is P700 is a chlorophyll a/chlorophyll a' dimer, A0 is one or more chlorophyll a, A1 is one or both phylloquinones and FX is a shared 4Fe-4S iron-sulfur center..

Its subcellular location is the plastid. It localises to the chloroplast thylakoid membrane. The enzyme catalyses reduced [plastocyanin] + hnu + oxidized [2Fe-2S]-[ferredoxin] = oxidized [plastocyanin] + reduced [2Fe-2S]-[ferredoxin]. In terms of biological role, psaA and PsaB bind P700, the primary electron donor of photosystem I (PSI), as well as the electron acceptors A0, A1 and FX. PSI is a plastocyanin-ferredoxin oxidoreductase, converting photonic excitation into a charge separation, which transfers an electron from the donor P700 chlorophyll pair to the spectroscopically characterized acceptors A0, A1, FX, FA and FB in turn. Oxidized P700 is reduced on the lumenal side of the thylakoid membrane by plastocyanin. The chain is Photosystem I P700 chlorophyll a apoprotein A1 from Drimys winteri (Winter's bark).